The following is a 389-amino-acid chain: Protein MEI2-like 7 (389 aa).

Residues 170–184 show a composition bias toward basic residues; the sequence is RRGMSKVYKPRKPQR. Residues 170–211 are disordered; it reads RRGMSKVYKPRKPQRAGRERSPSPSPVFTTRPMSPTPPMQKL. The RRM domain occupies 216–320; the sequence is TTVMVRNIPN…KIIDIRAARI (105 aa). Residues 351 to 370 are disordered; that stretch reads PRDGSTAGAGAPSPPAVKTV.

In terms of biological role, probable RNA-binding protein that may play a role in growth regulation. The protein is Protein MEI2-like 7 (OML7) of Oryza sativa subsp. japonica (Rice).